The chain runs to 523 residues: Maintenance of mitochondrial morphology protein 1 (523 aa).

The Lumenal segment spans residues 1–43; sequence MAGSTSASLQTPYFPSSTQINPVRVDHTLPLPPAQPSLSFTQG. Residues 44-64 traverse the membrane as a helical segment; the sequence is LLVGQLSVVLLIGAFIKFFIF. The Cytoplasmic portion of the chain corresponds to 65-523; sequence GEAPPPPSRG…GSMPDTVTET (459 aa). Disordered regions lie at residues 70–118, 295–349, 420–473, and 492–523; these read PPSR…SSST, TSDQ…SKHG, RTGL…IDRG, and GGHQ…VTET. Composition is skewed to polar residues over residues 74 to 96, 105 to 118, and 295 to 312; these read GLSN…TDSS, STSN…SSST, and TSDQ…TTSE. The SMP-LTD domain maps to 151 to 412; that stretch reads QPESLDWFNV…EPRVQVVGLP (262 aa). Gly residues predominate over residues 449-467; the sequence is GVSGGGGSGGGSGGGGGSM.

It belongs to the MMM1 family. In terms of assembly, homodimer. Component of the ER-mitochondria encounter structure (ERMES) or MDM complex, composed of MMM1, MDM10, MDM12 and MDM34. An MMM1 homodimer associates with one molecule of MDM12 on each side in a pairwise head-to-tail manner, and the SMP-LTD domains of MMM1 and MDM12 generate a continuous hydrophobic tunnel for phospholipid trafficking.

It localises to the endoplasmic reticulum membrane. Functionally, component of the ERMES/MDM complex, which serves as a molecular tether to connect the endoplasmic reticulum (ER) and mitochondria. Components of this complex are involved in the control of mitochondrial shape and protein biogenesis, and function in nonvesicular lipid trafficking between the ER and mitochondria. The MDM12-MMM1 subcomplex functions in the major beta-barrel assembly pathway that is responsible for biogenesis of all outer membrane beta-barrel proteins, and acts in a late step after the SAM complex. The MDM10-MDM12-MMM1 subcomplex further acts in the TOM40-specific pathway after the action of the MDM12-MMM1 complex. Essential for establishing and maintaining the structure of mitochondria and maintenance of mtDNA nucleoids. This Paracoccidioides brasiliensis (strain Pb03) protein is Maintenance of mitochondrial morphology protein 1.